Consider the following 209-residue polypeptide: Ribosomal RNA large subunit methyltransferase E (209 aa).

S-adenosyl-L-methionine is bound by residues glycine 63, tryptophan 65, aspartate 83, aspartate 99, and aspartate 124. Lysine 164 functions as the Proton acceptor in the catalytic mechanism.

The protein belongs to the class I-like SAM-binding methyltransferase superfamily. RNA methyltransferase RlmE family.

It is found in the cytoplasm. It carries out the reaction uridine(2552) in 23S rRNA + S-adenosyl-L-methionine = 2'-O-methyluridine(2552) in 23S rRNA + S-adenosyl-L-homocysteine + H(+). Specifically methylates the uridine in position 2552 of 23S rRNA at the 2'-O position of the ribose in the fully assembled 50S ribosomal subunit. This Sodalis glossinidius (strain morsitans) protein is Ribosomal RNA large subunit methyltransferase E.